A 145-amino-acid polypeptide reads, in one-letter code: Large ribosomal subunit protein uL11 (145 aa).

Belongs to the universal ribosomal protein uL11 family. As to quaternary structure, part of the ribosomal stalk of the 50S ribosomal subunit. Interacts with L10 and the large rRNA to form the base of the stalk. L10 forms an elongated spine to which L12 dimers bind in a sequential fashion forming a multimeric L10(L12)X complex. Post-translationally, one or more lysine residues are methylated.

Functionally, forms part of the ribosomal stalk which helps the ribosome interact with GTP-bound translation factors. This chain is Large ribosomal subunit protein uL11, found in Coxiella burnetii (strain Dugway 5J108-111).